Here is a 1001-residue protein sequence, read N- to C-terminus: Phosphoenolpyruvate carboxylase (1001 aa).

Catalysis depends on residues His189 and Lys642.

The protein belongs to the PEPCase type 1 family. Mg(2+) is required as a cofactor.

The enzyme catalyses oxaloacetate + phosphate = phosphoenolpyruvate + hydrogencarbonate. Its function is as follows. Forms oxaloacetate, a four-carbon dicarboxylic acid source for the tricarboxylic acid cycle. The chain is Phosphoenolpyruvate carboxylase from Prochlorococcus marinus (strain SARG / CCMP1375 / SS120).